Reading from the N-terminus, the 434-residue chain is Putative neutral sphingomyelinase (434 aa).

A Mg(2+)-binding site is contributed by glutamate 83. Histidine 318 acts as the Proton acceptor in catalysis. 2 consecutive transmembrane segments (helical) span residues 366–388 (IFFF…FEVF) and 392–414 (FAVL…LIGL).

The protein belongs to the neutral sphingomyelinase family.

Its subcellular location is the membrane. The enzyme catalyses an N-(acyl)-sphingosylphosphocholine + H2O = an N-acyl-sphingoid base + phosphocholine + H(+). The catalysed reaction is a sphingomyelin + H2O = phosphocholine + an N-acylsphing-4-enine + H(+). It carries out the reaction an N-acyl-15-methylhexadecasphing-4-enine-1-phosphocholine + H2O = an N-acyl-15-methylhexadecasphing-4-enine + phosphocholine + H(+). The protein operates within lipid metabolism; sphingolipid metabolism. Catalyzes the hydrolysis of sphingomyelin producing a ceramide (N-acyl-sphingoid base) and a phosphocholine. C.elegans contain specific sphingoid bases, which are unique or different in structure compared to the sphingoid bases found in other animals. Two examples of these distinctive compounds are: 15-methylhexadecasphinganine and 15-methylhexadecasphing-4-enine. The polypeptide is Putative neutral sphingomyelinase (Caenorhabditis elegans).